The sequence spans 684 residues: RNA helicase NPH-II (684 aa).

The region spanning 184–359 is the Helicase ATP-binding domain; sequence FRAWAARRPT…EFFPDAEFVH (176 aa). 197 to 204 provides a ligand contact to ATP; sequence GGTGVGKT. The DEXH box motif lies at 308–311; the sequence is DEVH. The Helicase C-terminal domain occupies 392 to 563; it reads NVSAALSAHR…DLYVQPSDLE (172 aa).

The protein belongs to the DEAD box helicase family. DEAH subfamily. As to quaternary structure, monomer.

It is found in the virion. The enzyme catalyses ATP + H2O = ADP + phosphate + H(+). In terms of biological role, NTP-dependent helicase that catalyzes unidirectional unwinding of 3'tailed duplex RNAs and plays an important role during transcription of early mRNAs, presumably by preventing R-loop formation behind the elongating RNA polymerase. Might also play a role in the export of newly synthesized mRNA chains out of the core into the cytoplasm. Required for replication and propagation of viral particles. The protein is RNA helicase NPH-II (NPH2) of Homo sapiens (Human).